A 105-amino-acid chain; its full sequence is Small ribosomal subunit protein uS10 (105 aa).

The protein belongs to the universal ribosomal protein uS10 family. In terms of assembly, part of the 30S ribosomal subunit.

Functionally, involved in the binding of tRNA to the ribosomes. The sequence is that of Small ribosomal subunit protein uS10 from Picosynechococcus sp. (strain ATCC 27264 / PCC 7002 / PR-6) (Agmenellum quadruplicatum).